The sequence spans 89 residues: Putative septation protein SpoVG (89 aa).

This sequence belongs to the SpoVG family.

Functionally, could be involved in septation. This is Putative septation protein SpoVG from Heliobacterium modesticaldum (strain ATCC 51547 / Ice1).